Consider the following 188-residue polypeptide: Elongation factor P (188 aa).

It belongs to the elongation factor P family.

Its subcellular location is the cytoplasm. It participates in protein biosynthesis; polypeptide chain elongation. Involved in peptide bond synthesis. Stimulates efficient translation and peptide-bond synthesis on native or reconstituted 70S ribosomes in vitro. Probably functions indirectly by altering the affinity of the ribosome for aminoacyl-tRNA, thus increasing their reactivity as acceptors for peptidyl transferase. This chain is Elongation factor P, found in Exiguobacterium sp. (strain ATCC BAA-1283 / AT1b).